The following is a 730-amino-acid chain: MLYKYLFIYIVTKISLSSSLYHNFCTINNTNGSNFNVFDTNNGRFLNKNNRIRNILNKNINKKSSFSFINGNSLKNFKNDHKYHDFTKFTKIPEFLEEDNEPIVSELIRNFCIIAHVDHGKSTLADRFLEFTKSVPPERLKEQYLDNMELERERGITIKLQSARIKYNSILDGKTYTLNLIDTPGHIDFNHEARRSISACEGAILVVDGTKGIEAQTVTTANIAIEKGLKIIPVVNKIDLEHCDFKSTAESLKKFFGFKESDILKASAKKGIGIEDILEAVVVSIPPPKVDLEKPFRALVFDSFYDPYRGAICYIRVCCVFRLYFQVFEGSTKIGDEITLMNADITSKVTGLGIMLPEMKQTHSLQLVNSSGQVGWITAGIKKTNEIHVGDTISLKSYVKKNLVEPINKFENSKPTVFAGIYPCIGGDFDKLQTALEKLKLNDHSFQFERSDSSMVGMGFKCGFNGLLHLDITVERLEREFDTQVIVTSPSVPYRCTLRDKSVVTVDDASKWPDESQIKSSEEPWTDVTLRVPEEYFLSFINIILSSVGSVMSMLSKMRGRFKEKNKVKDTNMVVMNYDLPLSEILSDFFNKLKSVTNGYGSYDYEGTFYEPIELCKLKILLNGTEAKGLAVVTPRNRAYDRGKLIVETLVNLIPSRQFKVPVQAVIGKRVISSSNIPAVKKNVIEKCSGGDPSRKKKLLENQARVLLVLINDVIGKETNGSGRMCNNPF.

The region spanning 106 to 289 (ELIRNFCIIA…AVVVSIPPPK (184 aa)) is the tr-type G domain. Residues 115 to 122 (AHVDHGKS), 182 to 186 (DTPGH), and 236 to 239 (NKID) each bind GTP.

Belongs to the TRAFAC class translation factor GTPase superfamily. Classic translation factor GTPase family. LepA subfamily.

It is found in the mitochondrion inner membrane. The catalysed reaction is GTP + H2O = GDP + phosphate + H(+). Functionally, promotes mitochondrial protein synthesis. May act as a fidelity factor of the translation reaction, by catalyzing a one-codon backward translocation of tRNAs on improperly translocated ribosomes. Binds to mitochondrial ribosomes in a GTP-dependent manner. The sequence is that of Translation factor GUF1 homolog, mitochondrial from Theileria annulata.